Here is a 665-residue protein sequence, read N- to C-terminus: MLRERTVRLQYGSRVEAVYVLGTQLWTDVYSAAPAGAKTFSLKHSEGVKVEVVRDGEAEEVVTNGKQRWALSPSTTLRLSMAQASTEASSDKVTVNYYEEDGSAPIDQAGLFLTAIEISLDVDADRDGEVEKNNPKKASWTWGPEGQGAILLVNCDRDTPWLPKEDCSDEKVYSKQDLQDMSQMILRTKGPDRLPAGYEIVLYISMSDSDKVGVFYVENPFFGQRYIHILGRQKLYHVVKYTGGSAELLFFVEGLRFPDESFSGLVSIHVSLLEYMAEDIPLTPIFTDTVTFRIAPWIMTPNILPPVSVFVCCMKDNYLFLKEVKNLVEKTNCELKVCFQYMNRGDRWIQDEIEFGYIEAPHKGFPVVLDSPRDGNLKDFPIKQLLGPDFGYVTREPLFETVTSLDSFGNLEVSPPVTVNGKAYPLGRILIGSSFPLSGGRRMTKVVRDFLQAQQVQAPVELYSDWLTVGHVDEFMTFVPIPGKKEFRLLMASTSACYQLFREKQKEGHGEAIMFKGLGGMSSKRITINKILSNESLTQENQYFQRCLDWNRDILKKELALTEKDIIDLPALFKMDEDRQARAFFPNMVNMIVLDKDLGIPKPFGPQVEEECCLETHVRGLLEPLGLACTFIDDISAYHKFLGEVHCGTNVRRKPFTFKWWHMVP.

The Ca(2+) site is built by Asp123, Asp125, Asp127, Glu131, Asn154, Asp156, Asp158, Asp166, Asp169, Lys171, Asp177, Asp180, Glu354, Asp389, Phe408, Leu411, and Glu412. The Nucleophile role is filled by Cys647.

It belongs to the protein arginine deiminase family. Homodimer. Requires Ca(2+) as cofactor. In terms of tissue distribution, spinal cord, submaxillary gland, cerebrum, cerebellum, and skeletal muscle.

It localises to the cytoplasm. It catalyses the reaction L-arginyl-[protein] + H2O = L-citrullyl-[protein] + NH4(+). Functionally, catalyzes the deimination of arginine residues of proteins. This Rattus norvegicus (Rat) protein is Protein-arginine deiminase type-2 (Padi2).